A 261-amino-acid polypeptide reads, in one-letter code: Cytochrome c oxidase subunit 3 (261 aa).

Over methionine 1–proline 15 the chain is Mitochondrial matrix. The chain crosses the membrane as a helical span at residues tryptophan 16–tryptophan 34. Residues phenylalanine 35–methionine 40 lie on the Mitochondrial intermembrane side of the membrane. Residues threonine 41 to threonine 66 form a helical membrane-spanning segment. Over phenylalanine 67–threonine 72 the chain is Mitochondrial matrix. A helical transmembrane segment spans residues proline 73–serine 105. The Mitochondrial intermembrane portion of the chain corresponds to leucine 106–glutamate 128. Residues valine 129–methionine 152 form a helical membrane-spanning segment. Topologically, residues glutamate 153–asparagine 155 are mitochondrial matrix. Residues arginine 156–glutamate 183 traverse the membrane as a helical segment. Topologically, residues alanine 184 to aspartate 190 are mitochondrial intermembrane. Residues glycine 191–leucine 223 form a helical membrane-spanning segment. Topologically, residues lysine 224–histidine 232 are mitochondrial matrix. Residues phenylalanine 233–isoleucine 256 form a helical membrane-spanning segment. At tyrosine 257 to serine 261 the chain is on the mitochondrial intermembrane side.

It belongs to the cytochrome c oxidase subunit 3 family. As to quaternary structure, component of the cytochrome c oxidase (complex IV, CIV), a multisubunit enzyme composed of 14 subunits. The complex is composed of a catalytic core of 3 subunits MT-CO1, MT-CO2 and MT-CO3, encoded in the mitochondrial DNA, and 11 supernumerary subunits COX4I, COX5A, COX5B, COX6A, COX6B, COX6C, COX7A, COX7B, COX7C, COX8 and NDUFA4, which are encoded in the nuclear genome. The complex exists as a monomer or a dimer and forms supercomplexes (SCs) in the inner mitochondrial membrane with NADH-ubiquinone oxidoreductase (complex I, CI) and ubiquinol-cytochrome c oxidoreductase (cytochrome b-c1 complex, complex III, CIII), resulting in different assemblies (supercomplex SCI(1)III(2)IV(1) and megacomplex MCI(2)III(2)IV(2)).

Its subcellular location is the mitochondrion inner membrane. The catalysed reaction is 4 Fe(II)-[cytochrome c] + O2 + 8 H(+)(in) = 4 Fe(III)-[cytochrome c] + 2 H2O + 4 H(+)(out). In terms of biological role, component of the cytochrome c oxidase, the last enzyme in the mitochondrial electron transport chain which drives oxidative phosphorylation. The respiratory chain contains 3 multisubunit complexes succinate dehydrogenase (complex II, CII), ubiquinol-cytochrome c oxidoreductase (cytochrome b-c1 complex, complex III, CIII) and cytochrome c oxidase (complex IV, CIV), that cooperate to transfer electrons derived from NADH and succinate to molecular oxygen, creating an electrochemical gradient over the inner membrane that drives transmembrane transport and the ATP synthase. Cytochrome c oxidase is the component of the respiratory chain that catalyzes the reduction of oxygen to water. Electrons originating from reduced cytochrome c in the intermembrane space (IMS) are transferred via the dinuclear copper A center (CU(A)) of subunit 2 and heme A of subunit 1 to the active site in subunit 1, a binuclear center (BNC) formed by heme A3 and copper B (CU(B)). The BNC reduces molecular oxygen to 2 water molecules using 4 electrons from cytochrome c in the IMS and 4 protons from the mitochondrial matrix. In Antidorcas marsupialis (Springbok), this protein is Cytochrome c oxidase subunit 3 (MT-CO3).